Reading from the N-terminus, the 382-residue chain is Protein RecA (382 aa).

79-86 serves as a coordination point for ATP; the sequence is GPESSGKT. A disordered region spans residues 362–382; it reads ATKSAAKGSEVQADVKTKGAA.

Belongs to the RecA family.

The protein localises to the cytoplasm. Its function is as follows. Can catalyze the hydrolysis of ATP in the presence of single-stranded DNA, the ATP-dependent uptake of single-stranded DNA by duplex DNA, and the ATP-dependent hybridization of homologous single-stranded DNAs. It interacts with LexA causing its activation and leading to its autocatalytic cleavage. The protein is Protein RecA of Synechococcus sp. (strain WH7803).